The chain runs to 362 residues: 3-dehydroquinate synthase (362 aa).

Residues 71–76 (DGEQYK), 105–109 (GVVGD), 129–130 (TT), lysine 142, lysine 151, and 169–172 (CLKT) each bind NAD(+). Zn(2+)-binding residues include glutamate 184, histidine 247, and histidine 264.

Belongs to the sugar phosphate cyclases superfamily. Dehydroquinate synthase family. NAD(+) is required as a cofactor. The cofactor is Co(2+). It depends on Zn(2+) as a cofactor.

It is found in the cytoplasm. It carries out the reaction 7-phospho-2-dehydro-3-deoxy-D-arabino-heptonate = 3-dehydroquinate + phosphate. The protein operates within metabolic intermediate biosynthesis; chorismate biosynthesis; chorismate from D-erythrose 4-phosphate and phosphoenolpyruvate: step 2/7. Functionally, catalyzes the conversion of 3-deoxy-D-arabino-heptulosonate 7-phosphate (DAHP) to dehydroquinate (DHQ). This Shigella flexneri protein is 3-dehydroquinate synthase.